Here is a 477-residue protein sequence, read N- to C-terminus: tRNA-2-methylthio-N(6)-dimethylallyladenosine synthase (477 aa).

Residues 3–120 enclose the MTTase N-terminal domain; that stretch reads KKLHIKTWGC…LPAMIKQVQE (118 aa). Positions 12, 49, 83, 157, 161, and 164 each coordinate [4Fe-4S] cluster. The Radical SAM core domain maps to 143–375; sequence RAEGATAFVS…QHVINNQSMQ (233 aa). The TRAM domain maps to 378–441; it reads RAMLGSTQRI…PNSLRGRFIR (64 aa).

It belongs to the methylthiotransferase family. MiaB subfamily. Monomer. It depends on [4Fe-4S] cluster as a cofactor.

The protein localises to the cytoplasm. The catalysed reaction is N(6)-dimethylallyladenosine(37) in tRNA + (sulfur carrier)-SH + AH2 + 2 S-adenosyl-L-methionine = 2-methylsulfanyl-N(6)-dimethylallyladenosine(37) in tRNA + (sulfur carrier)-H + 5'-deoxyadenosine + L-methionine + A + S-adenosyl-L-homocysteine + 2 H(+). Its function is as follows. Catalyzes the methylthiolation of N6-(dimethylallyl)adenosine (i(6)A), leading to the formation of 2-methylthio-N6-(dimethylallyl)adenosine (ms(2)i(6)A) at position 37 in tRNAs that read codons beginning with uridine. This Aeromonas salmonicida (strain A449) protein is tRNA-2-methylthio-N(6)-dimethylallyladenosine synthase.